Reading from the N-terminus, the 469-residue chain is MTTNRKFAIAILAAGKGTRLKSKHPKVLHEIAGKPLLDHVVAAAAKVVPPSQIFAIIGHEADRVREAMQASGIQFVEQKEQRGTGHAILQTRDALKDFDDVLVLSGDVPLIRTDTVERLFAFHREHAAAMTILTTEPPDPFGYGRVFRKHAGQSDEVDRIVEQKQLTPEQARNREINSGIYAFRVQPLFANLDKLTTDNPHGEYYLTDMAAILGGASEKVVAIRADDSHEVLGVNTRQDLASLDAHLRLQKCQQLMSAGVSIFKPETCMIDSDVEVGPDTIIEPFVQLLGNTKIGADCHIKSYTVISNSTIGDGVLLRHGCIVDSSKVAARALLGPYCHLRPASDIGEEAHIGNFVETKKTRVGKGSKANHLTYLGDTEIGTGVNIGAGTITCNYDGVNKFGTIIGDNVFVGSDTTLVAPIELGKGSYIGAGSCITENVPDDALAIGRGRQVVKEGWATKKRAEQKKKK.

A pyrophosphorylase region spans residues 1-237 (MTTNRKFAIA…SHEVLGVNTR (237 aa)). UDP-N-acetyl-alpha-D-glucosamine is bound by residues 12 to 15 (LAAG), Lys-26, Gln-78, 83 to 84 (GT), 105 to 107 (SGD), Gly-144, Glu-162, Asn-177, and Asn-235. Mg(2+) is bound at residue Asp-107. Asn-235 provides a ligand contact to Mg(2+). A linker region spans residues 238–258 (QDLASLDAHLRLQKCQQLMSA). An N-acetyltransferase region spans residues 259 to 469 (GVSIFKPETC…KKRAEQKKKK (211 aa)). UDP-N-acetyl-alpha-D-glucosamine-binding residues include Arg-341 and Lys-359. Catalysis depends on His-371, which acts as the Proton acceptor. Positions 374 and 385 each coordinate UDP-N-acetyl-alpha-D-glucosamine. Residues Ala-388, 394–395 (NY), Ser-413, Ala-431, and Arg-448 contribute to the acetyl-CoA site.

It in the N-terminal section; belongs to the N-acetylglucosamine-1-phosphate uridyltransferase family. This sequence in the C-terminal section; belongs to the transferase hexapeptide repeat family. In terms of assembly, homotrimer. Mg(2+) is required as a cofactor.

It is found in the cytoplasm. The enzyme catalyses alpha-D-glucosamine 1-phosphate + acetyl-CoA = N-acetyl-alpha-D-glucosamine 1-phosphate + CoA + H(+). It carries out the reaction N-acetyl-alpha-D-glucosamine 1-phosphate + UTP + H(+) = UDP-N-acetyl-alpha-D-glucosamine + diphosphate. The protein operates within nucleotide-sugar biosynthesis; UDP-N-acetyl-alpha-D-glucosamine biosynthesis; N-acetyl-alpha-D-glucosamine 1-phosphate from alpha-D-glucosamine 6-phosphate (route II): step 2/2. Its pathway is nucleotide-sugar biosynthesis; UDP-N-acetyl-alpha-D-glucosamine biosynthesis; UDP-N-acetyl-alpha-D-glucosamine from N-acetyl-alpha-D-glucosamine 1-phosphate: step 1/1. It participates in bacterial outer membrane biogenesis; LPS lipid A biosynthesis. Catalyzes the last two sequential reactions in the de novo biosynthetic pathway for UDP-N-acetylglucosamine (UDP-GlcNAc). The C-terminal domain catalyzes the transfer of acetyl group from acetyl coenzyme A to glucosamine-1-phosphate (GlcN-1-P) to produce N-acetylglucosamine-1-phosphate (GlcNAc-1-P), which is converted into UDP-GlcNAc by the transfer of uridine 5-monophosphate (from uridine 5-triphosphate), a reaction catalyzed by the N-terminal domain. The chain is Bifunctional protein GlmU from Koribacter versatilis (strain Ellin345).